A 298-amino-acid chain; its full sequence is Bifunctional protein FolD (298 aa).

NADP(+) is bound by residues 167-169, Ser192, and Ile233; that span reads GRS.

The protein belongs to the tetrahydrofolate dehydrogenase/cyclohydrolase family. In terms of assembly, homodimer.

It catalyses the reaction (6R)-5,10-methylene-5,6,7,8-tetrahydrofolate + NADP(+) = (6R)-5,10-methenyltetrahydrofolate + NADPH. The enzyme catalyses (6R)-5,10-methenyltetrahydrofolate + H2O = (6R)-10-formyltetrahydrofolate + H(+). It participates in one-carbon metabolism; tetrahydrofolate interconversion. In terms of biological role, catalyzes the oxidation of 5,10-methylenetetrahydrofolate to 5,10-methenyltetrahydrofolate and then the hydrolysis of 5,10-methenyltetrahydrofolate to 10-formyltetrahydrofolate. The chain is Bifunctional protein FolD from Caulobacter sp. (strain K31).